We begin with the raw amino-acid sequence, 81 residues long: Large ribosomal subunit protein bL31 (81 aa).

Belongs to the bacterial ribosomal protein bL31 family. Type A subfamily. Part of the 50S ribosomal subunit.

Its function is as follows. Binds the 23S rRNA. This is Large ribosomal subunit protein bL31 (rpmE) from Fusobacterium nucleatum subsp. nucleatum (strain ATCC 25586 / DSM 15643 / BCRC 10681 / CIP 101130 / JCM 8532 / KCTC 2640 / LMG 13131 / VPI 4355).